A 242-amino-acid chain; its full sequence is DNA repair protein RecO (242 aa).

This sequence belongs to the RecO family. Monomer.

In terms of biological role, involved in DNA repair and RecF pathway recombination. The protein is DNA repair protein RecO of Shigella flexneri serotype 5b (strain 8401).